The chain runs to 410 residues: Serine hydroxymethyltransferase (410 aa).

(6S)-5,6,7,8-tetrahydrofolate contacts are provided by residues L119 and 123 to 125; that span reads GHL. At K228 the chain carries N6-(pyridoxal phosphate)lysine. 351 to 353 is a (6S)-5,6,7,8-tetrahydrofolate binding site; sequence SPF.

This sequence belongs to the SHMT family. Homodimer. Pyridoxal 5'-phosphate serves as cofactor.

It is found in the cytoplasm. The enzyme catalyses (6R)-5,10-methylene-5,6,7,8-tetrahydrofolate + glycine + H2O = (6S)-5,6,7,8-tetrahydrofolate + L-serine. Its pathway is one-carbon metabolism; tetrahydrofolate interconversion. It participates in amino-acid biosynthesis; glycine biosynthesis; glycine from L-serine: step 1/1. Catalyzes the reversible interconversion of serine and glycine with tetrahydrofolate (THF) serving as the one-carbon carrier. This reaction serves as the major source of one-carbon groups required for the biosynthesis of purines, thymidylate, methionine, and other important biomolecules. Also exhibits THF-independent aldolase activity toward beta-hydroxyamino acids, producing glycine and aldehydes, via a retro-aldol mechanism. The chain is Serine hydroxymethyltransferase from Clostridium perfringens (strain 13 / Type A).